Consider the following 245-residue polypeptide: Uridylate kinase (245 aa).

An ATP-binding site is contributed by 16–19 (KLSG). Residues 24–29 (GDNGFG) form an involved in allosteric activation by GTP region. Residue Gly-59 coordinates UMP. ATP contacts are provided by Gly-60 and Arg-64. Residues Asp-78 and 139 to 146 (NGAPFFTT) contribute to the UMP site. Residues Asn-167, Tyr-173, and Asp-176 each contribute to the ATP site.

The protein belongs to the UMP kinase family. As to quaternary structure, homohexamer.

It is found in the cytoplasm. The catalysed reaction is UMP + ATP = UDP + ADP. The protein operates within pyrimidine metabolism; CTP biosynthesis via de novo pathway; UDP from UMP (UMPK route): step 1/1. Its activity is regulated as follows. Allosterically activated by GTP. Inhibited by UTP. Its function is as follows. Catalyzes the reversible phosphorylation of UMP to UDP. In Deinococcus radiodurans (strain ATCC 13939 / DSM 20539 / JCM 16871 / CCUG 27074 / LMG 4051 / NBRC 15346 / NCIMB 9279 / VKM B-1422 / R1), this protein is Uridylate kinase.